We begin with the raw amino-acid sequence, 658 residues long: Alkyldihydroxyacetonephosphate synthase, peroxisomal (658 aa).

Disordered regions lie at residues 1–41 (MAEA…LRVL) and 63–86 (AASA…IPKK). The N-terminal 58 residues, 1-58 (MAEAAAAAGGTGLGAGASYGSAADRDRDPDPDRAGRRLRVLSGHLLGRPREALSTNEC), are a transit peptide targeting the peroxisome. The segment covering 23–35 (ADRDRDPDPDRAG) has biased composition (basic and acidic residues). The span at 63-77 (AASAATAAPTATPAA) shows a compositional bias: low complexity. At S65 the chain carries Phosphoserine. T74 is subject to Phosphothreonine. K102 is modified (N6-acetyllysine). An FAD-binding PCMH-type domain is found at 202–384 (FERIPDIVLW…TEATIKIRPV (183 aa)). FAD-binding positions include 234–240 (PIGGGTS), 303–309 (DSLEFST), and 316–319 (TRAS). K347 bears the N6-acetyllysine mark. 368–374 (EGTLGVI) provides a ligand contact to FAD. R515 contacts substrate. The active-site Proton donor/acceptor is Y578. 2 important for enzyme activity regions span residues 615 to 617 (HHH) and 654 to 658 (NRNLL).

The protein belongs to the FAD-binding oxidoreductase/transferase type 4 family. As to quaternary structure, homodimer. It depends on FAD as a cofactor.

It is found in the peroxisome membrane. It localises to the peroxisome. It carries out the reaction a long chain fatty alcohol + a 1-acylglycerone 3-phosphate = a 1-O-alkylglycerone 3-phosphate + a long-chain fatty acid + H(+). It catalyses the reaction hexadecan-1-ol + 1-hexadecanoylglycerone 3-phosphate = 1-O-hexadecylglycerone 3-phosphate + hexadecanoate + H(+). The enzyme catalyses 1-hexadecanoylglycerone 3-phosphate + a long-chain fatty acid = a 1-acylglycerone 3-phosphate + hexadecanoate. Its pathway is glycerolipid metabolism; ether lipid biosynthesis. In terms of biological role, catalyzes the exchange of the acyl chain in acyl-dihydroxyacetonephosphate (acyl-DHAP) for a long chain fatty alcohol, yielding the first ether linked intermediate, i.e. alkyl-dihydroxyacetonephosphate (alkyl-DHAP), in the pathway of ether lipid biosynthesis. The polypeptide is Alkyldihydroxyacetonephosphate synthase, peroxisomal (AGPS) (Homo sapiens (Human)).